A 212-amino-acid polypeptide reads, in one-letter code: Large ribosomal subunit protein uL3 (212 aa).

Residues 119 to 146 (YQGNIKRWGQSRGPETHGSRYHRIPGSM) are disordered.

This sequence belongs to the universal ribosomal protein uL3 family. As to quaternary structure, part of the 50S ribosomal subunit. Forms a cluster with proteins L14 and L19.

Functionally, one of the primary rRNA binding proteins, it binds directly near the 3'-end of the 23S rRNA, where it nucleates assembly of the 50S subunit. This is Large ribosomal subunit protein uL3 from Lactobacillus helveticus (strain DPC 4571).